The primary structure comprises 101 residues: MAKKSKIARNEQRKVIVERYAAKRLELKKTLVDPNATDEAREAARLGLQKLPRNASPIRLRNRDQIDGRPRGTLQKFGISRVRFRDMAHRGELPGITKSSW.

This sequence belongs to the universal ribosomal protein uS14 family. In terms of assembly, part of the 30S ribosomal subunit. Contacts proteins S3 and S10.

Its function is as follows. Binds 16S rRNA, required for the assembly of 30S particles and may also be responsible for determining the conformation of the 16S rRNA at the A site. This chain is Small ribosomal subunit protein uS14, found in Paenarthrobacter aurescens (strain TC1).